We begin with the raw amino-acid sequence, 468 residues long: 6-phospho-beta-galactosidase (468 aa).

Residues glutamine 19, histidine 116, asparagine 159, glutamate 160, and asparagine 297 each contribute to the D-galactose 6-phosphate site. Catalysis depends on glutamate 160, which acts as the Proton donor. Glutamate 375 functions as the Nucleophile in the catalytic mechanism. D-galactose 6-phosphate is bound by residues serine 428, tryptophan 429, lysine 435, and tyrosine 437.

It belongs to the glycosyl hydrolase 1 family.

The enzyme catalyses a 6-phospho-beta-D-galactoside + H2O = D-galactose 6-phosphate + an alcohol. The protein operates within carbohydrate metabolism; lactose degradation; D-galactose 6-phosphate and beta-D-glucose from lactose 6-phosphate: step 1/1. The protein is 6-phospho-beta-galactosidase of Streptococcus sanguinis (strain SK36).